The following is a 628-amino-acid chain: MDSGSSSSDSAPDCWDQVDMESPGSAPSGDGVSSAVAEAQREPLSSAFSRKLNVNAKPFVPNVHAAEFVPSFLRGPTQPPTLPAGSGSNDETCTGAGYPQGKRMGRGAPVEPSREEPLVSLEGSNSAVTMELSEPVVENGEVEMALEESWEHSKEVSEAEPGGGSSGDSGPPEESGQEMMEEKEEIRKSKSVIVPSGAPKKEHVNVVFIGHVDAGKSTIGGQIMFLTGMVDKRTLEKYEREAKEKNRETWYLSWALDTNQEERDKGKTVEVGRAYFETERKHFTILDAPGHKSFVPNMIGGASQADLAVLVISARKGEFETGFEKGGQTREHAMLAKTAGVKHLIVLINKMDDPTVNWSIERYEECKEKLVPFLKKVGFSPKKDIHFMPCSGLTGANIKEQSDFCPWYTGLPFIPYLDNLPNFNRSIDGPIRLPIVDKYKDMGTVVLGKLESGSIFKGQQLVMMPNKHNVEVLGILSDDTETDFVAPGENLKIRLKGIEEEEILPGFILCDPSNLCHSGRTFDVQIVIIEHKSIICPGYNAVLHIHTCIEEVEITALISLVDKKSGEKSKTRPRFVKQDQVCIARLRTAGTICLETFKDFPQMGRFTLRDEGKTIAIGKVLKLVPEKD.

The span at 1–10 (MDSGSSSSDS) shows a compositional bias: low complexity. 3 disordered regions span residues 1 to 49 (MDSG…SAFS), 72 to 124 (FLRG…LEGS), and 146 to 195 (LEES…VIVP). A tr-type G domain is found at 201 to 425 (KEHVNVVFIG…YLDNLPNFNR (225 aa)). The G1 stretch occupies residues 210–217 (GHVDAGKS). 213 to 218 (DAGKST) contacts GTP. The segment at 266–270 (GKTVE) is G2. The G3 stretch occupies residues 287 to 290 (DAPG). GTP contacts are provided by residues 349–352 (NKMD) and 391–393 (SGL). A G4 region spans residues 349 to 352 (NKMD). Positions 391-393 (SGL) are G5.

Belongs to the TRAFAC class translation factor GTPase superfamily. Classic translation factor GTPase family. ERF3 subfamily. In terms of assembly, component of the eRF1-eRF3-GTP ternary complex, composed of ETF1/ERF1 and ERF3 (GSPT1/ERF3A or GSPT2/ERF3B) and GTP. Component of the transient SURF (SMG1-UPF1-eRF1-eRF3) complex. Interacts with UPF1 and PABPC1. Highly expressed in IUCC stage II colorectal cancer (CRC).

The protein resides in the cytoplasm. The catalysed reaction is GTP + H2O = GDP + phosphate + H(+). Functionally, GTPase component of the eRF1-eRF3-GTP ternary complex, a ternary complex that mediates translation termination in response to the termination codons UAA, UAG and UGA. GSPT2/ERF3B mediates ETF1/ERF1 delivery to stop codons: The eRF1-eRF3-GTP complex binds to a stop codon in the ribosomal A-site. GTP hydrolysis by GSPT2/ERF3B induces a conformational change that leads to its dissociation, permitting ETF1/ERF1 to accommodate fully in the A-site. Component of the transient SURF complex which recruits UPF1 to stalled ribosomes in the context of nonsense-mediated decay (NMD) of mRNAs containing premature stop codons. This Homo sapiens (Human) protein is Eukaryotic peptide chain release factor GTP-binding subunit ERF3B (GSPT2).